A 217-amino-acid chain; its full sequence is Small ribosomal subunit protein uS3c (217 aa).

The KH type-2 domain maps to 39–109 (IRNFLRTKLI…RFRITITYIP (71 aa)).

The protein belongs to the universal ribosomal protein uS3 family. In terms of assembly, part of the 30S ribosomal subunit.

The protein localises to the plastid. It localises to the chloroplast. This Chlorokybus atmophyticus (Soil alga) protein is Small ribosomal subunit protein uS3c (rps3).